Consider the following 162-residue polypeptide: Caveolin-2 (162 aa).

The Cytoplasmic portion of the chain corresponds to 1–86 (MGLETEKADV…FEVSKYVIYK (86 aa)). Tyr-19 is subject to Phosphotyrosine; by SRC. Phosphoserine is present on residues Ser-20 and Ser-23. A Phosphotyrosine; by SRC modification is found at Tyr-27. Residues 87–107 (FLTLFLAIPLAFAAGILFATL) constitute an intramembrane region (helical). The Cytoplasmic portion of the chain corresponds to 108-162 (SCLHIWIVMPFVKTCLMVLPSVQTIWKSVTDVVIAPLCASVGRSFSSVSMQLSRD).

This sequence belongs to the caveolin family. Monomer or homodimer. Interacts with CAV1; the interaction forms a stable heterooligomeric complex that is required for targeting to lipid rafts and for caveolae formation. Tyrosine phosphorylated forms do not form heterooligomers with the Tyr-19-phosphorylated form existing as a monomer or dimer, and the Tyr-27-form as a monomer only. Interacts (tyrosine phosphorylated form) with the SH2 domain-containing proteins, RASA1, NCK1 and SRC. Interacts (tyrosine phosphorylated form) with INSR, the interaction (Tyr-27-phosphorylated form) is increased on insulin stimulation. Interacts (Tyr-19 phosphorylated form) with MAPK1 (phosphorylated form); the interaction, promoted by insulin, leads to nuclear location and MAPK1 activation. Interacts with STAT3; the interaction is increased on insulin-induced tyrosine phosphorylation leading to STAT activation. Phosphorylated on serine and tyrosine residues. CAV1 promotes phosphorylation on Ser-23 which then targets the complex to the plasma membrane, lipid rafts and caveolae. Phosphorylation on both Tyr-19 and Tyr-27 is required for insulin-induced 'Ser-727' phosphorylation of STAT3 and its activation. Phosphorylation on Tyr-19 is required for insulin-induced phosphorylation of MAPK1 and DNA binding of STAT3. Tyrosine phosphorylation is induced by both EGF and insulin.

The protein resides in the nucleus. It is found in the cytoplasm. The protein localises to the golgi apparatus membrane. It localises to the cell membrane. Its subcellular location is the membrane. The protein resides in the caveola. Its function is as follows. May act as a scaffolding protein within caveolar membranes. Interacts directly with G-protein alpha subunits and can functionally regulate their activity. Acts as an accessory protein in conjunction with CAV1 in targeting to lipid rafts and driving caveolae formation. Positive regulator of cellular mitogenesis of the MAPK signaling pathway. Required for the insulin-stimulated nuclear translocation and activation of MAPK1 and STAT3, and the subsequent regulation of cell cycle progression. The protein is Caveolin-2 (CAV2) of Rhinolophus ferrumequinum (Greater horseshoe bat).